The chain runs to 460 residues: UDP-N-acetylmuramoylalanine--D-glutamate ligase (460 aa).

Position 120-126 (Gly-120–Thr-126) interacts with ATP.

This sequence belongs to the MurCDEF family.

The protein resides in the cytoplasm. The enzyme catalyses UDP-N-acetyl-alpha-D-muramoyl-L-alanine + D-glutamate + ATP = UDP-N-acetyl-alpha-D-muramoyl-L-alanyl-D-glutamate + ADP + phosphate + H(+). It participates in cell wall biogenesis; peptidoglycan biosynthesis. In terms of biological role, cell wall formation. Catalyzes the addition of glutamate to the nucleotide precursor UDP-N-acetylmuramoyl-L-alanine (UMA). This is UDP-N-acetylmuramoylalanine--D-glutamate ligase from Lactobacillus gasseri (strain ATCC 33323 / DSM 20243 / BCRC 14619 / CIP 102991 / JCM 1131 / KCTC 3163 / NCIMB 11718 / NCTC 13722 / AM63).